Here is a 308-residue protein sequence, read N- to C-terminus: MTSKLEQLKQFTTVVADTGDLDAITRLKPVDATTNPSLLLKAAAIPGYADLLKQVKADAKGDVDLACDKFAVAVGSGILKVIPGRISTEVDARLSFDEPALLNKARQLIALYEAAGVPKDRVLIKLASTWEGIRAAEKLEKEGIQTNLTLLFSFAQAQACADAGVFLISPFVGRIYDWYKKSTGKDYVGAEDPGVQSVTRIYNYYKANGYNTVVMGASFRNIGQIEQLAGCDRLTISPELLQQLSDDQGELPQVLKPGNAGEAKQPLNESQFRWAMNEDAMGTEKLAEGIRQFARDQEKLEKLMAEKA.

Lysine 125 serves as the catalytic Schiff-base intermediate with substrate.

This sequence belongs to the transaldolase family. Type 1 subfamily. Homodimer.

The protein resides in the cytoplasm. It carries out the reaction D-sedoheptulose 7-phosphate + D-glyceraldehyde 3-phosphate = D-erythrose 4-phosphate + beta-D-fructose 6-phosphate. The protein operates within carbohydrate degradation; pentose phosphate pathway; D-glyceraldehyde 3-phosphate and beta-D-fructose 6-phosphate from D-ribose 5-phosphate and D-xylulose 5-phosphate (non-oxidative stage): step 2/3. Functionally, transaldolase is important for the balance of metabolites in the pentose-phosphate pathway. In Pseudomonas putida (strain GB-1), this protein is Transaldolase.